The following is a 187-amino-acid chain: Methylamine dehydrogenase light chain (187 aa).

Residues 1–57 (MKKDTGFDSKIEKLARTTASKTGRRGFIGRLGGFLVGSALLPLLPVDRRSRLGGEVQ) constitute a signal peptide (tat-type signal). Cystine bridges form between Cys-79–Cys-144, Cys-85–Cys-117, Cys-92–Cys-177, Cys-94–Cys-142, Cys-102–Cys-133, and Cys-134–Cys-165. The residue at position 113 (Trp-113) is a Tryptophylquinone. Positions 113–164 (WVASCYNPGDQQTYLIAYRDCCGKQTCGRCNCVNTQGELPVYRPEFNNDIVW) form a cross-link, tryptophan tryptophylquinone (Trp-Trp).

It belongs to the aromatic amine dehydrogenase light chain family. In terms of assembly, heterotetramer of two light and two heavy chains. Requires tryptophan tryptophylquinone residue as cofactor. Post-translationally, predicted to be exported by the Tat system. The position of the signal peptide cleavage has not been experimentally proven. In terms of processing, tryptophan tryptophylquinone (TTQ) is formed by oxidation of the indole ring of a tryptophan to form tryptophylquinone followed by covalent cross-linking with another tryptophan residue.

It localises to the periplasm. It carries out the reaction 2 oxidized [amicyanin] + methylamine + H2O = 2 reduced [amicyanin] + formaldehyde + NH4(+) + 2 H(+). The protein operates within one-carbon metabolism; methylamine degradation; formaldehyde from methylamine: step 1/1. Its function is as follows. Methylamine dehydrogenase carries out the oxidation of methylamine. Electrons are passed from methylamine dehydrogenase to amicyanin. This Methylophilus methylotrophus (Bacterium W3A1) protein is Methylamine dehydrogenase light chain (mauA).